Here is a 467-residue protein sequence, read N- to C-terminus: UPF0236 protein TTE0033/TTE0744/TTE0838/TTE0852/TTE1082/TTE1247/TTE1519/TTE1678/TTE1739/TTE1823/TTE2212 (467 aa).

This sequence belongs to the UPF0236 family.

In Caldanaerobacter subterraneus subsp. tengcongensis (strain DSM 15242 / JCM 11007 / NBRC 100824 / MB4) (Thermoanaerobacter tengcongensis), this protein is UPF0236 protein TTE0033/TTE0744/TTE0838/TTE0852/TTE1082/TTE1247/TTE1519/TTE1678/TTE1739/TTE1823/TTE2212.